Consider the following 488-residue polypeptide: Zinc metalloproteinase-disintegrin VMP-II (488 aa).

Positions 1–20 (MIQVLLVTICLAVFPYQGSS) are cleaved as a signal peptide. A propeptide spanning residues 21–191 (IILESGNVND…KASQSNIPPE (171 aa)) is cleaved from the precursor. The region spanning 198 to 396 (RYIELVVVAD…STTRCLHNEP (199 aa)) is the Peptidase M12B domain. 2 residues coordinate Ca(2+): Glu201 and Asp285. N-linked (GlcNAc...) asparagine glycosylation is present at Asn296. Intrachain disulfides connect Cys309-Cys391, Cys349-Cys373, and Cys351-Cys356. Zn(2+) is bound at residue His334. Residue Glu335 is part of the active site. Zn(2+)-binding residues include His338 and His344. Positions 391, 394, 409, 413, 416, and 419 each coordinate Ca(2+). The Disintegrin domain maps to 404–488 (PPFCGNYFKE…ADCPRNGLYG (85 aa)). 7 disulfides stabilise this stretch: Cys407-Cys426, Cys418-Cys436, Cys420-Cys431, Cys430-Cys453, Cys444-Cys450, Cys449-Cys474, and Cys462-Cys481. Residues 466–468 (RGD) carry the Cell attachment site motif.

Belongs to the venom metalloproteinase (M12B) family. P-II subfamily. P-IIb sub-subfamily. As to quaternary structure, homodimer; disulfide-linked (disintegrin). Zn(2+) serves as cofactor. Expressed by the venom gland.

Its subcellular location is the secreted. Zinc metalloproteinase-disintegrin VMP-II: inhibits ADP-induced platelet aggregation (probably by binding integrin alpha-IIb/beta-3 (ITGA2B/ITGB3)) and degrades fibrinogen. Its function is as follows. Recombinant disintegrin r-Cam-dis (413-488): this recombinant protein inhibits platelet adhesion to fibrinogen (IC(50) is 1 nM), inhibits collagen- (IC(50) is 18 nM) and ADP-induced (IC(50) is 6 nM) platelet aggregation, and also inhibits platelet function on clot retraction. May act by binding integrin alpha-IIb/beta-3 (ITGA2B/ITGB3). The protein is Zinc metalloproteinase-disintegrin VMP-II of Crotalus adamanteus (Eastern diamondback rattlesnake).